The following is a 339-amino-acid chain: DNA-directed RNA polymerase subunit alpha (339 aa).

The interval 1 to 233 is alpha N-terminal domain (alpha-NTD); the sequence is MVREEVAGST…DLFLPFLHAE (233 aa). Residues 264–339 are alpha C-terminal domain (alpha-CTD); that stretch reads KKGIPLNCIF…IDLLKNKLSF (76 aa).

It belongs to the RNA polymerase alpha chain family. In terms of assembly, in plastids the minimal PEP RNA polymerase catalytic core is composed of four subunits: alpha, beta, beta', and beta''. When a (nuclear-encoded) sigma factor is associated with the core the holoenzyme is formed, which can initiate transcription.

It localises to the plastid. Its subcellular location is the chloroplast. The enzyme catalyses RNA(n) + a ribonucleoside 5'-triphosphate = RNA(n+1) + diphosphate. Functionally, DNA-dependent RNA polymerase catalyzes the transcription of DNA into RNA using the four ribonucleoside triphosphates as substrates. This Bromus inermis (Smooth brome grass) protein is DNA-directed RNA polymerase subunit alpha.